The following is a 60-amino-acid chain: Small, acid-soluble spore protein H 1 (60 aa).

Residues I39 to S60 are disordered.

This sequence belongs to the SspH family.

Its subcellular location is the spore core. This chain is Small, acid-soluble spore protein H 1, found in Geobacillus kaustophilus (strain HTA426).